Here is a 158-residue protein sequence, read N- to C-terminus: MNQSCPNKTSFKIAFIQARWHADIVDEARKSFVAELAAKTGGSVEVEIFDVPGAYEIPLHAKTLARTGRYAAIVGAAFVIDGGIYRHDFVATAVINGMMQVQLETEVPVLSVVLTPHHFHESKEHHDFFHAHFKVKGVEAAHAALQIVSERSRIAALV.

Residues Trp20, 54 to 56 (AYE), and 78 to 80 (FVI) contribute to the 5-amino-6-(D-ribitylamino)uracil site. Arg86 serves as the catalytic Proton donor. Ser111 contributes to the 5-amino-6-(D-ribitylamino)uracil binding site. A (2S)-2-hydroxy-3-oxobutyl phosphate-binding site is contributed by His125.

The protein belongs to the DMRL synthase family. In terms of assembly, homodecamer, arranged as a dimer of pentamers.

It localises to the cytoplasm. The catalysed reaction is (2S)-2-hydroxy-3-oxobutyl phosphate + 5-amino-6-(D-ribitylamino)uracil = 6,7-dimethyl-8-(1-D-ribityl)lumazine + phosphate + 2 H2O + H(+). It participates in cofactor biosynthesis; riboflavin biosynthesis; riboflavin from 2-hydroxy-3-oxobutyl phosphate and 5-amino-6-(D-ribitylamino)uracil: step 1/2. Catalyzes the formation of 6,7-dimethyl-8-ribityllumazine by condensation of 5-amino-6-(D-ribitylamino)uracil with 3,4-dihydroxy-2-butanone 4-phosphate. This is the penultimate step in the biosynthesis of riboflavin. The isozyme RibH2 but not RibH1 is essential for Brucella intracellular survival and replication inside macrophages or in mice. Displays low catalytic activity in comparison with the isozyme RibH1. Is a highly immunogenic protein. Activates dendritic cells (DCs) in vitro, increasing the levels of costimulatory molecules and the secretion of pro-inflammatory cytokines, and recruits DCs, B cells and CD8+ T cells in vivo, both effects in a TLR4-dependent manner. Induces the cross presentation of covalently attached peptides and generates a strong and long-lasting humoral immune response without adjuvants; TLR4 signaling is necessary for the induction of the cytotoxic response but not for antigen cross presentation. Elicits a TLR4-mediated protective response against B16 melanoma in mice, slowing tumor growth and prolonging mice survival. The protein is 6,7-dimethyl-8-ribityllumazine synthase 2 of Brucella abortus (strain 2308).